The sequence spans 144 residues: MKSYIAKPEEVQRKWYVVDAEGKPLGRVASQVALILRGKNKPTYTPHVDTGDYVVIINAEKVVLTGKKLDQKMLRHHSLYPGGLKEVPYKEALAKKPEFVFEEAVRRMLPKGPLGRKMLKKLKVYRGSEHNNEAQNPEVLELRY.

The protein belongs to the universal ribosomal protein uL13 family. As to quaternary structure, part of the 50S ribosomal subunit.

This protein is one of the early assembly proteins of the 50S ribosomal subunit, although it is not seen to bind rRNA by itself. It is important during the early stages of 50S assembly. The polypeptide is Large ribosomal subunit protein uL13 (Clostridium tetani (strain Massachusetts / E88)).